Reading from the N-terminus, the 517-residue chain is Shugoshin 1 (517 aa).

The stretch at 1 to 89 (MAKERCQKRS…DVILQLRKEC (89 aa)) forms a coiled coil. The interval 1–176 (MAKERCQKRS…DFDSGKVEST (176 aa)) is necessary for interaction with PPP2CA and PPP2R1A. 4 disordered regions span residues 107 to 136 (QSEE…LSGK), 149 to 173 (PYQT…SGKV), 267 to 317 (PEQI…TLDG), and 334 to 427 (HPTP…QESP). The stretch at 268-291 (EQIESKHKRARKRRAEQRRTKQRC) forms a coiled coil. The span at 273–302 (KHKRARKRRAEQRRTKQRCKSKSSLRSKGN) shows a compositional bias: basic residues. Over residues 341–363 (KMNNGCNKETDSSNSEVSDLECS) the composition is skewed to polar residues. Positions 379–390 (RLRDYRESERAV) are enriched in basic and acidic residues. Phosphoserine is present on Ser426. Positions 441-445 (PRVKI) match the PXVXL/I motif motif. Positions 447–455 (KPSLPPKRR) match the D-box motif. Ser497 carries the post-translational modification Phosphoserine; by NEK2.

It belongs to the shugoshin family. As to quaternary structure, interacts with PPP2CA (or PPP2CB), PPP2R1B, PPP2R5A, PPP2R5B, PPP2R5C, PPP2R5D, PPP2R5E, SET, LRRC59, RBM10 (or RBM5), RPL10A, RPL28, RPL7, RPL7A and RPLP1. Interaction with protein phosphatase 2A occurs most probably through direct binding to the regulatory B56 subunits: PPP2R1B, PPP2R5A, PPP2R5B, PPP2R5C, PPP2R5D, PPP2R5E. Interacts with PPP2R1A and NEK2. Interacts with CDCA8. Post-translationally, ubiquitinated and degraded during mitotic exit by APC/C-Cdh1. Phosphorylation by NEK2 is essential for chromosome congression in mitosis and for the proper attachment of spindle microtubule to the kinetochore. Phosphorylated by PLK1 and AUKRB. In terms of tissue distribution, ubiquitously expressed in proliferating cells. Moderately expressed in the oocytes.

It is found in the nucleus. It localises to the chromosome. Its subcellular location is the centromere. The protein localises to the kinetochore. The protein resides in the cytoplasm. It is found in the cytoskeleton. It localises to the spindle pole. Its subcellular location is the microtubule organizing center. The protein localises to the centrosome. The protein resides in the nucleus speckle. Functionally, plays a central role in chromosome cohesion during mitosis by preventing premature dissociation of cohesin complex from centromeres after prophase, when most of cohesin complex dissociates from chromosomes arms. May act by preventing phosphorylation of the STAG2 subunit of cohesin complex at the centromere, ensuring cohesin persistence at centromere until cohesin cleavage by ESPL1/separase at anaphase. Essential for proper chromosome segregation during mitosis and this function requires interaction with PPP2R1A. Its phosphorylated form is necessary for chromosome congression and for the proper attachment of spindle microtubule to the kinetochore. Necessary for kinetochore localization of PLK1 and CENPF. May play a role in the tension sensing mechanism of the spindle-assembly checkpoint by regulating PLK1 kinetochore affinity. Involved in centromeric enrichment of AUKRB in prometaphase. The chain is Shugoshin 1 from Mus musculus (Mouse).